A 431-amino-acid chain; its full sequence is Mothers against decapentaplegic homolog 6 (431 aa).

The segment covering 1-15 has biased composition (basic residues); that stretch reads MFRSKRSGLVRRLWR. The tract at residues 1-95 is disordered; sequence MFRSKRSGLV…SPPGPGGGEA (95 aa). A compositionally biased stretch (polar residues) spans 29 to 38; that stretch reads GQSSERNATA. A compositionally biased stretch (pro residues) spans 71–90; sequence PELPPPPPPPPPGGASPPGP. The MH1 domain maps to 85–209; sequence ASPPGPGGGE…FSRLCGPESP (125 aa). Residues C139, C182, C194, and H199 each contribute to the Zn(2+) site. A compositionally biased stretch (polar residues) spans 235–245; sequence TETEATNSPNV. Positions 235 to 258 are disordered; sequence TETEATNSPNVTPGEFSDASTSPD. Positions 265–431 constitute an MH2 domain; sequence WCNVAYWEHR…WLEILLSNNR (167 aa).

This sequence belongs to the dwarfin/SMAD family. As to expression, developing heart, eyes and limbs.

It is found in the nucleus. Transforming growth factor-beta superfamily receptors signaling occurs through the Smad family of intracellular mediators. SMAD6 is an inhibitory Smad (i-Smad) that negatively regulates signaling downstream of type I transforming growth factor-beta. Acts as a mediator of TGF-beta and BMP anti-inflammatory activities. Suppresses IL1R-TLR signaling through its direct interaction with PEL1, preventing NF-kappa-B activation, nuclear transport and NF-kappa-B-mediated expression of pro-inflammatory genes. Blocks the BMP-SMAD1 signaling pathway by competing with SMAD4 for receptor-activated SMAD1-binding. Binds to regulatory elements in target promoter regions. The protein is Mothers against decapentaplegic homolog 6 (SMAD6) of Gallus gallus (Chicken).